The sequence spans 274 residues: Nuclease (274 aa).

Positions 1–24 are cleaved as a signal peptide; sequence MGICGKLGVAALVALIVGCSPVQS. The Proton acceptor role is filled by histidine 124. Residues asparagine 155, aspartate 246, glutamate 249, aspartate 255, phenylalanine 256, glutamine 265, and glutamate 269 each contribute to the Mn(2+) site.

The protein belongs to the DNA/RNA non-specific endonuclease family. Monomer. Mn(2+) is required as a cofactor. The cofactor is Mg(2+). Requires Ca(2+) as cofactor. Co(2+) serves as cofactor. The N-terminus is blocked.

It localises to the periplasm. Functionally, catalyzes the degradation of both RNA and DNA; has the potential to act as an endonuclease. The polypeptide is Nuclease (nucA) (Nostoc sp. (strain PCC 7120 / SAG 25.82 / UTEX 2576)).